The chain runs to 157 residues: Large ribosomal subunit protein eL21 (157 aa).

A disordered region spans residues 110-132; it reads QANDQAKAEGNKAGKRVSTKRNP.

It belongs to the eukaryotic ribosomal protein eL21 family.

This is Large ribosomal subunit protein eL21 (RPL21) from Tetrahymena thermophila (strain SB210).